The primary structure comprises 102 residues: Acid shock protein (102 aa).

The first 21 residues, 1 to 21 (MKKVLGLVVAAAMGLSSAAFA), serve as a signal peptide directing secretion. Residues 22–41 (AETATTPAPTATTTKAAPAK) are compositionally biased toward low complexity. Residues 22–58 (AETATTPAPTATTTKAAPAKTTHHKKQHKAAPAQKAQ) constitute a propeptide that is removed on maturation. The disordered stretch occupies residues 22–102 (AETATTPAPT…PAKPAAQPAA (81 aa)). The segment covering 80 to 90 (AAKKHAGKHSH) has biased composition (basic residues). Residues 91–102 (QQPAKPAAQPAA) show a composition bias toward low complexity.

This sequence belongs to the Asr family. Post-translationally, proteolytic processing gives rise to the active protein.

It localises to the periplasm. Its function is as follows. Required for growth and/or survival at acidic conditions. The protein is Acid shock protein of Escherichia coli (strain SE11).